The chain runs to 213 residues: Large ribosomal subunit protein uL1 (213 aa).

This sequence belongs to the universal ribosomal protein uL1 family. In terms of assembly, part of the 50S ribosomal subunit.

In terms of biological role, binds directly to 23S rRNA. Probably involved in E site tRNA release. Functionally, protein L1 is also a translational repressor protein, it controls the translation of its operon by binding to its mRNA. This chain is Large ribosomal subunit protein uL1, found in Methanococcus maripaludis (strain DSM 14266 / JCM 13030 / NBRC 101832 / S2 / LL).